Here is a 747-residue protein sequence, read N- to C-terminus: Protein MTSS 2 (747 aa).

Residues 1-252 (METAEKECGA…EQVIKDLKGS (252 aa)) enclose the IMD domain. Residues 135–159 (EIKKKSSDTLKLQKKARKELLGKGD) adopt a coiled-coil conformation. Low complexity-rich tracts occupy residues 256 to 284 (WSYQ…SSSS), 321 to 332 (SSVSSHDSGFVS), and 349 to 367 (TSQK…TCQS). Disordered regions lie at residues 256 to 302 (WSYQ…YSPS), 318 to 441 (ARLS…EEVS), 457 to 522 (LEHQ…RNSN), and 543 to 599 (PTAG…PTVP). At threonine 260 the chain carries Phosphothreonine. Residue serine 264 is modified to Phosphoserine. Positions 368–378 (VSECSSPTSDW) are enriched in polar residues. A compositionally biased stretch (basic and acidic residues) spans 397–406 (DRVELLRDTE). Serine 441 carries the post-translational modification Phosphoserine. Over residues 466–479 (SLQYSSGYSTQTTT) the composition is skewed to low complexity. Over residues 480–492 (PSCSEDTIPSQGS) the composition is skewed to polar residues. Phosphoserine occurs at positions 579, 601, 612, 624, 634, and 639. Disordered stretches follow at residues 638-664 (LSLP…EDEQ) and 691-720 (GQFP…DPPA). Position 643 is a phosphothreonine (threonine 643). 2 stretches are compositionally biased toward low complexity: residues 646-659 (GSPS…PGAG) and 696-707 (PTALSATPTEET). Residues 719–736 (PAEDMLVAIRRGVRLRRT) form the WH2 domain.

Belongs to the MTSS family. Interacts (via IMD domain) with RAC1; this interaction may be important to potentiate PDGF-induced RAC1 activation.

The protein localises to the cytoplasm. It is found in the cell projection. It localises to the ruffle. Its function is as follows. Involved in plasma membrane dynamics. Potentiated PDGF-mediated formation of membrane ruffles and lamellipodia in fibroblasts, acting via RAC1 activation. May function in actin bundling. The protein is Protein MTSS 2 of Homo sapiens (Human).